The chain runs to 238 residues: Uridylate kinase (238 aa).

12 to 15 (KLSG) provides a ligand contact to ATP. Position 54 (glycine 54) interacts with UMP. The ATP site is built by glycine 55 and arginine 59. Residues aspartate 74 and 135-142 (TGNPYFTT) contribute to the UMP site. ATP contacts are provided by threonine 162, tyrosine 168, and aspartate 171.

This sequence belongs to the UMP kinase family. As to quaternary structure, homohexamer.

It is found in the cytoplasm. It catalyses the reaction UMP + ATP = UDP + ADP. It functions in the pathway pyrimidine metabolism; CTP biosynthesis via de novo pathway; UDP from UMP (UMPK route): step 1/1. Inhibited by UTP. Its function is as follows. Catalyzes the reversible phosphorylation of UMP to UDP. The sequence is that of Uridylate kinase from Lawsonia intracellularis (strain PHE/MN1-00).